Reading from the N-terminus, the 119-residue chain is Large ribosomal subunit protein bL19 (119 aa).

It belongs to the bacterial ribosomal protein bL19 family.

Its function is as follows. This protein is located at the 30S-50S ribosomal subunit interface and may play a role in the structure and function of the aminoacyl-tRNA binding site. The polypeptide is Large ribosomal subunit protein bL19 (Psychromonas ingrahamii (strain DSM 17664 / CCUG 51855 / 37)).